The following is a 373-amino-acid chain: Phospho-N-acetylmuramoyl-pentapeptide-transferase (373 aa).

Helical transmembrane passes span glycine 34–leucine 54, threonine 78–alanine 98, leucine 100–phenylalanine 120, leucine 141–serine 161, phenylalanine 181–glycine 201, glycine 212–alanine 232, leucine 252–proline 272, alanine 275–valine 295, isoleucine 301–valine 321, and glutamine 350–leucine 370.

It belongs to the glycosyltransferase 4 family. MraY subfamily. Mg(2+) serves as cofactor.

Its subcellular location is the cell inner membrane. It catalyses the reaction UDP-N-acetyl-alpha-D-muramoyl-L-alanyl-gamma-D-glutamyl-meso-2,6-diaminopimeloyl-D-alanyl-D-alanine + di-trans,octa-cis-undecaprenyl phosphate = di-trans,octa-cis-undecaprenyl diphospho-N-acetyl-alpha-D-muramoyl-L-alanyl-D-glutamyl-meso-2,6-diaminopimeloyl-D-alanyl-D-alanine + UMP. The protein operates within cell wall biogenesis; peptidoglycan biosynthesis. Functionally, catalyzes the initial step of the lipid cycle reactions in the biosynthesis of the cell wall peptidoglycan: transfers peptidoglycan precursor phospho-MurNAc-pentapeptide from UDP-MurNAc-pentapeptide onto the lipid carrier undecaprenyl phosphate, yielding undecaprenyl-pyrophosphoryl-MurNAc-pentapeptide, known as lipid I. This is Phospho-N-acetylmuramoyl-pentapeptide-transferase from Rhizobium rhizogenes (strain K84 / ATCC BAA-868) (Agrobacterium radiobacter).